The following is a 154-amino-acid chain: MALPVYAMSCFRLSKLLCKKLTSAMTEFWWSSCENKRKISWVAWQKLCKSKEDDGGLGFRDLGWFNQALLAKQSFRIIHQPHTLLSRLLRSRYFPHSSMMECSVGTRPSYAWRSIIHGRELLSRGLLRTIGDGIHTKVWLDRWIMDETPLPPLN.

It localises to the mitochondrion. This is an uncharacterized protein from Arabidopsis thaliana (Mouse-ear cress).